Reading from the N-terminus, the 613-residue chain is Vitamin B12 transporter BtuB (613 aa).

A signal peptide spans Met-1–Ala-22. The short motif at Asp-29–Asn-36 is the TonB box element. The TBDR plug domain occupies Val-41–Ile-154. Residues Gln-159–Phe-613 enclose the TBDR beta-barrel domain. The TonB C-terminal box motif lies at His-591 to Phe-613.

It belongs to the TonB-dependent receptor family. BtuB (TC 1.B.14.3.1) subfamily.

It is found in the cell outer membrane. Its function is as follows. Involved in the active translocation of vitamin B12 (cyanocobalamin) across the outer membrane to the periplasmic space. It derives its energy for transport by interacting with the trans-periplasmic membrane protein TonB. This chain is Vitamin B12 transporter BtuB, found in Vibrio vulnificus (strain YJ016).